The chain runs to 683 residues: Long-chain-fatty-acid--CoA ligase 5 (683 aa).

Residues 12-32 (LPTPALICLLTFGTAIFLWLI) form a helical; Signal-anchor for type III membrane protein membrane-spanning segment. The Cytoplasmic segment spans residues 33–683 (NRPQPVLPLI…IKSLYESIEE (651 aa)). Position 361 is an N6-acetyllysine (K361).

The protein belongs to the ATP-dependent AMP-binding enzyme family.

It is found in the mitochondrion. The protein resides in the endoplasmic reticulum. The protein localises to the mitochondrion outer membrane. It localises to the endoplasmic reticulum membrane. Its subcellular location is the cell membrane. The enzyme catalyses a long-chain fatty acid + ATP + CoA = a long-chain fatty acyl-CoA + AMP + diphosphate. It carries out the reaction (5Z,8Z,11Z,14Z)-eicosatetraenoate + ATP + CoA = (5Z,8Z,11Z,14Z)-eicosatetraenoyl-CoA + AMP + diphosphate. The catalysed reaction is hexadecanoate + ATP + CoA = hexadecanoyl-CoA + AMP + diphosphate. It catalyses the reaction (E)-hexadec-2-enoate + ATP + CoA = (2E)-hexadecenoyl-CoA + AMP + diphosphate. The enzyme catalyses 15-hydroxy-(5Z,8Z,11Z,13E)-eicosatetraenoate + ATP + CoA = 15-hydroxy-(5Z,8Z,11Z,13E)-eicosatetraenoyl-CoA + AMP + diphosphate. It carries out the reaction 12-hydroxy-(5Z,8Z,10E,14Z)-eicosatetraenoate + ATP + CoA = 12-hydroxy-(5Z,8Z,10E,14Z)-eicosatetraenoyl-CoA + AMP + diphosphate. The catalysed reaction is 5-hydroxy-(6E,8Z,11Z,14Z)-eicosatetraenoate + ATP + CoA = 5-hydroxy-(6E,8Z,11Z,14Z)-eicosatetraenoyl-CoA + AMP + diphosphate. It catalyses the reaction 14,15-epoxy-(5Z,8Z,11Z)-eicosatrienoate + ATP + CoA = 14,15-epoxy-(5Z,8Z,11Z)-eicosatrienoyl-CoA + AMP + diphosphate. The enzyme catalyses 11,12-epoxy-(5Z,8Z,14Z)-eicosatrienoate + ATP + CoA = 11,12-epoxy-(5Z,8Z,14Z)-eicosatrienoyl-CoA + AMP + diphosphate. It carries out the reaction (9Z)-octadecenoate + ATP + CoA = (9Z)-octadecenoyl-CoA + AMP + diphosphate. Catalyzes the conversion of long-chain fatty acids to their active form acyl-CoAs for both synthesis of cellular lipids, and degradation via beta-oxidation. ACSL5 may activate fatty acids from exogenous sources for the synthesis of triacylglycerol destined for intracellular storage. It was suggested that it may also stimulate fatty acid oxidation. At the villus tip of the crypt-villus axis of the small intestine may sensitize epithelial cells to apoptosis specifically triggered by the death ligand TRAIL. May have a role in the survival of glioma cells. Utilizes a wide range of saturated fatty acids with a preference for C16-C18 unsaturated fatty acids. The sequence is that of Long-chain-fatty-acid--CoA ligase 5 from Mus musculus (Mouse).